Consider the following 349-residue polypeptide: Cobalt-precorrin-5B C(1)-methyltransferase (349 aa).

The protein belongs to the CbiD family.

It carries out the reaction Co-precorrin-5B + S-adenosyl-L-methionine = Co-precorrin-6A + S-adenosyl-L-homocysteine. It functions in the pathway cofactor biosynthesis; adenosylcobalamin biosynthesis; cob(II)yrinate a,c-diamide from sirohydrochlorin (anaerobic route): step 6/10. In terms of biological role, catalyzes the methylation of C-1 in cobalt-precorrin-5B to form cobalt-precorrin-6A. The protein is Cobalt-precorrin-5B C(1)-methyltransferase of Saccharolobus islandicus (strain M.16.27) (Sulfolobus islandicus).